The chain runs to 290 residues: Fructose-bisphosphate aldolase (290 aa).

Ser51 contributes to the D-glyceraldehyde 3-phosphate binding site. The Proton donor role is filled by Asp86. Residues His87, Asp107, Glu137, and His179 each coordinate Zn(2+). Gly180 contributes to the dihydroxyacetone phosphate binding site. Zn(2+) is bound at residue His208. Residues Gly209–Ser211 and Asn230–Thr233 each bind dihydroxyacetone phosphate.

This sequence belongs to the class II fructose-bisphosphate aldolase family. In terms of assembly, homodimer. Zn(2+) serves as cofactor.

It carries out the reaction beta-D-fructose 1,6-bisphosphate = D-glyceraldehyde 3-phosphate + dihydroxyacetone phosphate. Its pathway is carbohydrate degradation; glycolysis; D-glyceraldehyde 3-phosphate and glycerone phosphate from D-glucose: step 4/4. Catalyzes the aldol condensation of dihydroxyacetone phosphate (DHAP or glycerone-phosphate) with glyceraldehyde 3-phosphate (G3P) to form fructose 1,6-bisphosphate (FBP) in gluconeogenesis and the reverse reaction in glycolysis. This Ureaplasma parvum serovar 3 (strain ATCC 700970) protein is Fructose-bisphosphate aldolase (fba).